The following is a 130-amino-acid chain: Protein ApaG (130 aa).

The region spanning 3-127 (SAVTRGIEVT…FSLDVPEQRR (125 aa)) is the ApaG domain.

The sequence is that of Protein ApaG from Brucella suis biovar 1 (strain 1330).